The primary structure comprises 452 residues: Protein FAM81B (452 aa).

Composition is skewed to polar residues over residues 1-11 (MQLQFLGTLAS) and 38-55 (IMSSDTNVNKSASPTATA). The disordered stretch occupies residues 1–85 (MQLQFLGTLA…KVRLSPAKMS (85 aa)). Coiled-coil stretches lie at residues 164-192 (IQTITSIVKKLSQNIEILEDQIRARDQAA) and 329-452 (LGHI…LQEV).

The protein belongs to the FAM81 family.

This chain is Protein FAM81B (FAM81B), found in Homo sapiens (Human).